The sequence spans 99 residues: Defensin-like protein 2 (99 aa).

Residues 1–30 (MAMAKKSVSSFTLIFILVLVIFEVPEIKAQ) form the signal peptide. Intrachain disulfides connect cysteine 34/cysteine 86, cysteine 47/cysteine 71, cysteine 56/cysteine 81, and cysteine 60/cysteine 83. Residues 94–99 (ILRGGI) constitute a propeptide that is removed on maturation.

The protein belongs to the DEFL family. Protease inhibitor I18 (RTI/MTI-2) subfamily.

It is found in the secreted. Functionally, inhibits bovine beta-trypsin and alpha-chymotrypsin on a 1:1 molar basis. In Sinapis alba (White mustard), this protein is Defensin-like protein 2.